Here is a 136-residue protein sequence, read N- to C-terminus: MWSRLVWLGLRAPLGGRQGFTSKADPQGSGRITAAVIEHLERLALVDFGSREAVARLEKAIAFADRLRAVDTDGVEPMESVLEDRCLYLRSDNVVEGNCADELLQNSHRVVEEYFVAPPGNISLPKLDEQEPFPHS.

The protein belongs to the GatC family. In terms of assembly, subunit of the heterotrimeric GatCAB amidotransferase (AdT) complex, composed of A (QRSL1), B (GATB) and C (GATC) subunits.

The protein localises to the mitochondrion. It carries out the reaction L-glutamyl-tRNA(Gln) + L-glutamine + ATP + H2O = L-glutaminyl-tRNA(Gln) + L-glutamate + ADP + phosphate + H(+). Allows the formation of correctly charged Gln-tRNA(Gln) through the transamidation of misacylated Glu-tRNA(Gln) in the mitochondria. The reaction takes place in the presence of glutamine and ATP through an activated gamma-phospho-Glu-tRNA(Gln). This chain is Glutamyl-tRNA(Gln) amidotransferase subunit C, mitochondrial, found in Homo sapiens (Human).